A 231-amino-acid chain; its full sequence is Ureidoacrylate amidohydrolase RutB (231 aa).

Asp-25 acts as the Proton acceptor in catalysis. Lys-134 is an active-site residue. Residue Cys-167 is the Nucleophile of the active site.

The protein belongs to the isochorismatase family. RutB subfamily.

The catalysed reaction is (Z)-3-ureidoacrylate + H2O + H(+) = (Z)-3-aminoacrylate + NH4(+) + CO2. It catalyses the reaction (Z)-3-ureidoacrylate + H2O = (Z)-3-aminoacrylate + carbamate + H(+). It carries out the reaction (Z)-2-methylureidoacrylate + H2O + H(+) = (Z)-2-methylaminoacrylate + NH4(+) + CO2. Functionally, hydrolyzes ureidoacrylate to form aminoacrylate and carbamate. The carbamate hydrolyzes spontaneously, thereby releasing one of the nitrogen atoms of the pyrimidine ring as ammonia and one of its carbon atoms as CO2. This is Ureidoacrylate amidohydrolase RutB from Escherichia coli O157:H7 (strain EC4115 / EHEC).